The following is a 277-amino-acid chain: 3-methyl-2-oxobutanoate hydroxymethyltransferase (277 aa).

The Mg(2+) site is built by Asp42 and Asp81. 3-methyl-2-oxobutanoate-binding positions include 42 to 43 (DS), Asp81, and Lys110. Glu112 is a Mg(2+) binding site. Glu179 serves as the catalytic Proton acceptor.

Belongs to the PanB family. As to quaternary structure, homodecamer; pentamer of dimers. Mg(2+) serves as cofactor.

The protein resides in the cytoplasm. The enzyme catalyses 3-methyl-2-oxobutanoate + (6R)-5,10-methylene-5,6,7,8-tetrahydrofolate + H2O = 2-dehydropantoate + (6S)-5,6,7,8-tetrahydrofolate. It participates in cofactor biosynthesis; (R)-pantothenate biosynthesis; (R)-pantoate from 3-methyl-2-oxobutanoate: step 1/2. Catalyzes the reversible reaction in which hydroxymethyl group from 5,10-methylenetetrahydrofolate is transferred onto alpha-ketoisovalerate to form ketopantoate. The sequence is that of 3-methyl-2-oxobutanoate hydroxymethyltransferase from Anaplasma marginale (strain Florida).